The following is a 478-amino-acid chain: MLYEKFEYNINNLIGNFSLSKISIAVSGGSDSVALLYLANIWAEKNNIELFVISVDHNLREQSKQETHYIQNISNSLNRKHYSLSFDHQNNFSNLQERAREGRYDLMTNLCLELDILVLLTAHHEDDYVENFCLRLERNSGIFGLSSSNINWYNNIHIIRPLYNIPKSELVEYLVSHNIKWFEDESNSSDKYRRNVIRQKLAKGADYIRHFSKPVYREEFKGDTERSTAAYTSVREDASTGTASKLSLEAKCGKMSKAAIISQQLKTNKRIENEFKPELISAIAEAVKIFEYGFAFLDLVKFDKFSNEVKVQIINFLLIIISGQSRAARFYSVEPILKLITQDVNFKNTLHGCIIKRIQNELLIYREFGKKLPESKILLDKSVIWDNRFCITKNQEAPNCFVTHLSLKDYKIIKKQLDLEPLKNLSCKNHNAVLLTLPIIKILEKVIAIPHISYYDNDMWNFEVSFSPNFVSRFTHFC.

Ser27 to Ser32 contributes to the ATP binding site.

Belongs to the tRNA(Ile)-lysidine synthase family.

It is found in the cytoplasm. It catalyses the reaction cytidine(34) in tRNA(Ile2) + L-lysine + ATP = lysidine(34) in tRNA(Ile2) + AMP + diphosphate + H(+). In terms of biological role, ligates lysine onto the cytidine present at position 34 of the AUA codon-specific tRNA(Ile) that contains the anticodon CAU, in an ATP-dependent manner. Cytidine is converted to lysidine, thus changing the amino acid specificity of the tRNA from methionine to isoleucine. This is tRNA(Ile)-lysidine synthase from Rickettsia rickettsii (strain Iowa).